The primary structure comprises 429 residues: Glucose-6-phosphate exchanger SLC37A4 (429 aa).

Helical transmembrane passes span 84–104 (LLLV…PVFA), 105–125 (ALWF…GKVL), 139–159 (AILS…ATIL), 167–187 (STLA…LLLI), 219–239 (ELLL…VFGV), 260–280 (LVGS…SIAA), 302–322 (GLLL…RVTV), 329–349 (LWIL…IALF), 368–388 (IVGL…STIA), and 394–414 (STAF…FFLL).

Belongs to the major facilitator superfamily. Organophosphate:Pi antiporter (OPA) (TC 2.A.1.4) family. In terms of tissue distribution, mostly expressed in liver and kidney.

The protein localises to the endoplasmic reticulum membrane. It carries out the reaction D-glucose 6-phosphate(in) + phosphate(out) = D-glucose 6-phosphate(out) + phosphate(in). Its activity is regulated as follows. Inhibited by vanadate and chlorogenic acid. Functionally, inorganic phosphate and glucose-6-phosphate antiporter of the endoplasmic reticulum. Transports cytoplasmic glucose-6-phosphate into the lumen of the endoplasmic reticulum and translocates inorganic phosphate into the opposite direction. Forms with glucose-6-phosphatase the complex responsible for glucose production through glycogenolysis and gluconeogenesis. Hence, it plays a central role in homeostatic regulation of blood glucose levels. This chain is Glucose-6-phosphate exchanger SLC37A4, found in Homo sapiens (Human).